The primary structure comprises 123 residues: Small ribosomal subunit protein uS12 (123 aa).

Positions 1 to 32 (MPTIQQLVRKGRTDKISKNKTPALKGSPQRRG) are disordered. Aspartate 89 bears the 3-methylthioaspartic acid mark. Positions 103–123 (DTQGVKGRKQARSRYGAKKEK) are disordered. Positions 108-123 (KGRKQARSRYGAKKEK) are enriched in basic residues.

Belongs to the universal ribosomal protein uS12 family. Part of the 30S ribosomal subunit. Contacts proteins S8 and S17. May interact with IF1 in the 30S initiation complex.

Functionally, with S4 and S5 plays an important role in translational accuracy. Its function is as follows. Interacts with and stabilizes bases of the 16S rRNA that are involved in tRNA selection in the A site and with the mRNA backbone. Located at the interface of the 30S and 50S subunits, it traverses the body of the 30S subunit contacting proteins on the other side and probably holding the rRNA structure together. The combined cluster of proteins S8, S12 and S17 appears to hold together the shoulder and platform of the 30S subunit. In Cutibacterium acnes (strain DSM 16379 / KPA171202) (Propionibacterium acnes), this protein is Small ribosomal subunit protein uS12.